A 461-amino-acid chain; its full sequence is O-methyltransferase CTB2 (461 aa).

Aspartate 288 contacts S-adenosyl-L-methionine. Histidine 339 serves as the catalytic Proton acceptor.

This sequence belongs to the class I-like SAM-binding methyltransferase superfamily. Cation-independent O-methyltransferase family. COMT subfamily.

It participates in mycotoxin biosynthesis. O-methyltransferase; part of the gene cluster that mediates the biosynthesis of cercosporin, a light-activated, non-host-selective toxin. The perylenequinone chromophore of cercosporin absorbs light energy to attain an electronically-activated triplet state and produces active oxygen species such as the hydroxyl radical, superoxide, hydrogen peroxide or singlet oxygen upon reaction with oxygen molecules. These reactive oxygen species cause damage to various cellular components including lipids, proteins and nucleic acids. The first step of cercosporin biosynthesis is performed by the polyketide synthase CTB1 which catalyzes the formation of nor-toralactone. The starter unit acyltransferase (SAT) domain of CTB1 initiates polyketide extension by the selective utilization of acetyl-CoA, which is elongated to the heptaketide in the beta-ketoacyl synthase (KS) domain by successive condensations with six malonyl units introduced by the malonyl acyltransferase (MAT) domain. The product template (PT) domain catalyzes C4-C9 and C2-C11 aldol cyclizations and dehydrations to a trihydroxynaphthalene, which is thought to be delivered to the thioesterase (TE) domain for product release. The bifunctional enzyme CTB3 then methylates nor-toralactone to toralactone before conducting an unusual oxidative aromatic ring opening. The O-methyltransferase CTB2 further methylates the nascent OH-6 of the CBT3 product, blocking further oxidation at this site before the reductase CTB6 reduces the 2-oxopropyl ketone at position C7, giving naphthalene. The FAD-dependent monooxygenase CTB5 in concert with the multicopper oxidase CTB12 are responsible for homodimerization of naphthalene with CTB7 installing the dioxepine moiety, finally producing cercosporin. The fasciclin domain-containing protein CTB11 might act with CTB5 and CTB12 whereas the roles of CTB9 and CTB10 have still to be elucidated. This chain is O-methyltransferase CTB2, found in Cercospora nicotianae (Barn spot disease fungus).